The following is a 121-amino-acid chain: Large ribosomal subunit protein uL18 (121 aa).

The protein belongs to the universal ribosomal protein uL18 family. Part of the 50S ribosomal subunit; part of the 5S rRNA/L5/L18/L25 subcomplex. Contacts the 5S and 23S rRNAs.

Its function is as follows. This is one of the proteins that bind and probably mediate the attachment of the 5S RNA into the large ribosomal subunit, where it forms part of the central protuberance. This Ehrlichia chaffeensis (strain ATCC CRL-10679 / Arkansas) protein is Large ribosomal subunit protein uL18.